The sequence spans 564 residues: Large neutral amino acids transporter small subunit 3 (564 aa).

A helical membrane pass occupies residues 20-40 (VVENLFFSAVLLGWASLLIML). N-linked (GlcNAc...) asparagine glycans are attached at residues Asn-54 and Asn-57. Transmembrane regions (helical) follow at residues 78 to 98 (LGFTIGSFLLSATTLPLGILM), 105 to 124 (PLRLVGSACFAASCTLMALA), 131 to 151 (LSPLIFLALSLNGFAGICLTF), 165 to 185 (STFMALMIGSYASSAITFPGI), and 191 to 211 (AGVPFTVIMFTWSGLACLIFL). Residues Ser-262 and Ser-267 each carry the phosphoserine modification. 2 helical membrane-spanning segments follow: residues 303–323 (IFLWSLVTMGMTQLRVIFYMG) and 357–377 (SIFGVMQLLCLLTCPLIGYIM). N-linked (GlcNAc...) asparagine glycosylation is present at Asn-396. The residue at position 398 (Ser-398) is a Phosphoserine. 4 helical membrane passes run 424-444 (AINAFTLTNILLVGFGIACLI), 451-471 (LLAFVLHTIVRGFFHSACGGL), 490-510 (LISAVFALLQQLLFMAMVGPL), and 515-535 (FWVNLGLLLLSFLGFLLPSYL). Asn-558 is a glycosylation site (N-linked (GlcNAc...) asparagine).

The protein belongs to the SLC43A transporter (TC 2.A.1.44) family. Expressed in the kidney cortex as well as liver, pancreas, and skeletal muscle. In kidney expressed in the glomerular tuft (at protein level). Expressed in liver, skeletal muscle and pancreas (at protein level).

The protein localises to the cell membrane. It is found in the apical cell membrane. The protein resides in the endoplasmic reticulum membrane. It catalyses the reaction D-leucine(in) = D-leucine(out). It carries out the reaction L-leucine(in) = L-leucine(out). The enzyme catalyses L-isoleucine(in) = L-isoleucine(out). The catalysed reaction is L-methionine(in) = L-methionine(out). It catalyses the reaction L-phenylalanine(in) = L-phenylalanine(out). It carries out the reaction L-valine(in) = L-valine(out). Uniport that mediates the transport of neutral amino acids such as L-leucine, L-isoleucine, L-valine, and L-phenylalanine. The transport activity is sodium ions-independent, electroneutral and mediated by a facilitated diffusion. The polypeptide is Large neutral amino acids transporter small subunit 3 (Mus musculus (Mouse)).